We begin with the raw amino-acid sequence, 450 residues long: Tubulin alpha-2 chain (450 aa).

Gln-11 contributes to the GTP binding site. Lys-40 is subject to N6-acetyllysine. Residues Glu-71, Gly-144, Thr-145, Thr-179, Asn-206, and Asn-228 each contribute to the GTP site. A Mg(2+)-binding site is contributed by Glu-71. Glu-254 is an active-site residue.

It belongs to the tubulin family. In terms of assembly, dimer of alpha and beta chains. A typical microtubule is a hollow water-filled tube with an outer diameter of 25 nm and an inner diameter of 15 nM. Alpha-beta heterodimers associate head-to-tail to form protofilaments running lengthwise along the microtubule wall with the beta-tubulin subunit facing the microtubule plus end conferring a structural polarity. Microtubules usually have 13 protofilaments but different protofilament numbers can be found in some organisms and specialized cells. It depends on Mg(2+) as a cofactor. Post-translationally, undergoes a tyrosination/detyrosination cycle, the cyclic removal and re-addition of a C-terminal tyrosine residue by the enzymes tubulin tyrosine carboxypeptidase (TTCP) and tubulin tyrosine ligase (TTL), respectively. In terms of processing, acetylation of alpha chains at Lys-40 stabilizes microtubules and affects affinity and processivity of microtubule motors. This modification has a role in multiple cellular functions, ranging from cell motility, cell cycle progression or cell differentiation to intracellular trafficking and signaling.

Its subcellular location is the cytoplasm. It is found in the cytoskeleton. The catalysed reaction is GTP + H2O = GDP + phosphate + H(+). Its function is as follows. Tubulin is the major constituent of microtubules, a cylinder consisting of laterally associated linear protofilaments composed of alpha- and beta-tubulin heterodimers. Microtubules grow by the addition of GTP-tubulin dimers to the microtubule end, where a stabilizing cap forms. Below the cap, tubulin dimers are in GDP-bound state, owing to GTPase activity of alpha-tubulin. This chain is Tubulin alpha-2 chain, found in Gossypium hirsutum (Upland cotton).